Here is a 434-residue protein sequence, read N- to C-terminus: MVGARAGRVPAAAAAAAAVLIVAACVFSSLAGAAAAAEVVGGAAQGNTERISGSAGDVLEDNPVGRLKVFVYDLPSKYNKRIVAKDPRCLNHMFAAEIFMHRFLLSSAVRTLNPEQADWFYAPVYTTCDLTHAGLPLPFKSPRMMRSAIQFLSRKWPFWNRTDGADHFFVVPHDFGACFHYQEEKAIERGILPLLRRATLVQTFGQKNHVCLKEGSITIPPYAPPQKMQAHLIPPDTPRSIFVYFRGLFYDNGNDPEGGYYARGARASLWENFKNNPLFDISTEHPATYYEDMQRSVFCLCPLGWAPWSPRLVEAVVFGCIPVIIADDIVLPFADAIPWDEIGVFVDEEDVPRLDSILTSIPIDDILRKQRLLANPSMKQAMLFPQPAQPRDAFHQILNGLARKLPHPDSVYLKPGEKHLNWTAGPVADLKPWK.

Topologically, residues 1–10 (MVGARAGRVP) are cytoplasmic. The chain crosses the membrane as a helical; Signal-anchor for type II membrane protein span at residues 11–31 (AAAAAAAAVLIVAACVFSSLA). Residues 32-434 (GAAAAAEVVG…GPVADLKPWK (403 aa)) lie on the Lumenal side of the membrane. N-linked (GlcNAc...) asparagine glycans are attached at residues asparagine 160 and asparagine 421.

It belongs to the glycosyltransferase 47 family.

The protein localises to the golgi apparatus membrane. Its function is as follows. Involved in the synthesis of glucuronoxylan hemicellulose in secondary cell walls. The protein is Probable glucuronosyltransferase Os02g0520750 of Oryza sativa subsp. japonica (Rice).